The following is a 60-amino-acid chain: Cytotoxin 1 (60 aa).

4 cysteine pairs are disulfide-bonded: C3-C21, C14-C38, C42-C53, and C54-C59.

It belongs to the three-finger toxin family. Short-chain subfamily. Type IA cytotoxin sub-subfamily. As to quaternary structure, monomer in solution; Homodimer and oligomer in the presence of negatively charged lipids forming a pore with a size ranging between 20 and 30 Angstroms. As to expression, expressed by the venom gland.

It is found in the secreted. Its subcellular location is the target cell membrane. Shows cytolytic activity on many different cells by forming pore in lipid membranes. In vivo, increases heart rate or kills the animal by cardiac arrest. In addition, it binds to heparin with high affinity, interacts with Kv channel-interacting protein 1 (KCNIP1) in a calcium-independent manner, and binds to integrin alpha-V/beta-3 (ITGAV/ITGB3) with moderate affinity. This is Cytotoxin 1 from Naja naja (Indian cobra).